Consider the following 513-residue polypeptide: tRNA-2-methylthio-N(6)-dimethylallyladenosine synthase (513 aa).

Residues 67–185 (KTFLIKTYGC…LPEILEEAYL (119 aa)) form the MTTase N-terminal domain. Positions 76, 112, 146, 222, 226, and 229 each coordinate [4Fe-4S] cluster. In terms of domain architecture, Radical SAM core spans 208–438 (REGNIKAWVN…NKKVACYSER (231 aa)). The TRAM domain maps to 441 to 504 (QQYEGQTVQV…QFSLNGTFIS (64 aa)).

The protein belongs to the methylthiotransferase family. MiaB subfamily. As to quaternary structure, monomer. The cofactor is [4Fe-4S] cluster.

The protein localises to the cytoplasm. It catalyses the reaction N(6)-dimethylallyladenosine(37) in tRNA + (sulfur carrier)-SH + AH2 + 2 S-adenosyl-L-methionine = 2-methylsulfanyl-N(6)-dimethylallyladenosine(37) in tRNA + (sulfur carrier)-H + 5'-deoxyadenosine + L-methionine + A + S-adenosyl-L-homocysteine + 2 H(+). In terms of biological role, catalyzes the methylthiolation of N6-(dimethylallyl)adenosine (i(6)A), leading to the formation of 2-methylthio-N6-(dimethylallyl)adenosine (ms(2)i(6)A) at position 37 in tRNAs that read codons beginning with uridine. This Staphylococcus saprophyticus subsp. saprophyticus (strain ATCC 15305 / DSM 20229 / NCIMB 8711 / NCTC 7292 / S-41) protein is tRNA-2-methylthio-N(6)-dimethylallyladenosine synthase.